A 397-amino-acid chain; its full sequence is 3-ketoacyl-CoA thiolase, mitochondrial (397 aa).

A mitochondrion; not cleaved-targeting transit peptide spans 1–16 (MALLRGVFVVAAKRTP). K25 is subject to N6-acetyllysine; alternate. K25 is subject to N6-succinyllysine; alternate. N6-succinyllysine is present on K45. The active-site Acyl-thioester intermediate is C92. T119 carries the post-translational modification Phosphothreonine. The residue at position 121 (S121) is a Phosphoserine. Residue Y127 is modified to Phosphotyrosine. Phosphothreonine is present on T136. An N6-acetyllysine; alternate modification is found at K137. Position 137 is an N6-succinyllysine; alternate (K137). S140 is modified (phosphoserine). N6-acetyllysine; alternate occurs at positions 143, 171, 191, and 209. N6-succinyllysine; alternate is present on residues K143, K171, K191, and K209. N6-succinyllysine occurs at positions 211, 212, and 214. CoA-binding residues include R224 and T227. K234 carries the post-translational modification N6-acetyllysine; alternate. The residue at position 234 (K234) is an N6-succinyllysine; alternate. At K240 the chain carries N6-succinyllysine. Position 241 is an N6-acetyllysine (K241). Position 251 (S251) interacts with CoA. N6-acetyllysine is present on residues K269 and K270. K305 carries the post-translational modification N6-acetyllysine; alternate. Position 305 is an N6-succinyllysine; alternate (K305). Position 310 is a phosphoserine (S310). K312 carries the N6-acetyllysine; alternate modification. An N6-succinyllysine; alternate modification is found at K312. The residue at position 333 (S333) is a Phosphoserine. 2 positions are modified to N6-acetyllysine: K340 and K375. C382 serves as the catalytic Proton donor/acceptor.

Belongs to the thiolase-like superfamily. Thiolase family. In terms of assembly, homotetramer. Interacts with BNIP3.

It is found in the mitochondrion. The catalysed reaction is an acyl-CoA + acetyl-CoA = a 3-oxoacyl-CoA + CoA. It carries out the reaction 2 acetyl-CoA = acetoacetyl-CoA + CoA. The enzyme catalyses acetyl-CoA + H2O = acetate + CoA + H(+). It catalyses the reaction propanoyl-CoA + H2O = propanoate + CoA + H(+). The catalysed reaction is butanoyl-CoA + H2O = butanoate + CoA + H(+). It carries out the reaction hexanoyl-CoA + H2O = hexanoate + CoA + H(+). The enzyme catalyses octanoyl-CoA + H2O = octanoate + CoA + H(+). It catalyses the reaction decanoyl-CoA + H2O = decanoate + CoA + H(+). The catalysed reaction is dodecanoyl-CoA + H2O = dodecanoate + CoA + H(+). It carries out the reaction tetradecanoyl-CoA + H2O = tetradecanoate + CoA + H(+). The enzyme catalyses hexadecanoyl-CoA + H2O = hexadecanoate + CoA + H(+). The protein operates within lipid metabolism; fatty acid beta-oxidation. Functionally, in the production of energy from fats, this is one of the enzymes that catalyzes the last step of the mitochondrial beta-oxidation pathway, an aerobic process breaking down fatty acids into acetyl-CoA. Using free coenzyme A/CoA, catalyzes the thiolytic cleavage of medium- to long-chain unbranched 3-oxoacyl-CoAs into acetyl-CoA and a fatty acyl-CoA shortened by two carbon atoms. Also catalyzes the condensation of two acetyl-CoA molecules into acetoacetyl-CoA and could be involved in the production of ketone bodies. Also displays hydrolase activity on various fatty acyl-CoAs. Thereby, could be responsible for the production of acetate in a side reaction to beta-oxidation. Abolishes BNIP3-mediated apoptosis and mitochondrial damage. The sequence is that of 3-ketoacyl-CoA thiolase, mitochondrial (ACAA2) from Homo sapiens (Human).